A 206-amino-acid polypeptide reads, in one-letter code: Small ribosomal subunit protein uS4 (206 aa).

The S4 RNA-binding domain maps to 96–158 (SRLDNVVYRM…AKKQLRIQNA (63 aa)).

Belongs to the universal ribosomal protein uS4 family. Part of the 30S ribosomal subunit. Contacts protein S5. The interaction surface between S4 and S5 is involved in control of translational fidelity.

One of the primary rRNA binding proteins, it binds directly to 16S rRNA where it nucleates assembly of the body of the 30S subunit. Its function is as follows. With S5 and S12 plays an important role in translational accuracy. This Francisella tularensis subsp. mediasiatica (strain FSC147) protein is Small ribosomal subunit protein uS4.